The primary structure comprises 316 residues: HTH-type transcriptional regulator cbl (316 aa).

The HTH lysR-type domain maps to Met1 to Met59. The segment at residues Leu19–Arg38 is a DNA-binding region (H-T-H motif).

It belongs to the LysR transcriptional regulatory family.

Its function is as follows. May be an accessory regulatory protein within the cys regulon. The polypeptide is HTH-type transcriptional regulator cbl (cbl) (Klebsiella aerogenes (Enterobacter aerogenes)).